The sequence spans 444 residues: MEGENWRVAPGGALHGEARVPGDKSISHRAVMLGALADGTTRITGMLEGADVLATIDVFRALGVAIEGPEQGAVTVHGVGWEGLRPPARELDVGNSGTSMRLLAGLLAGLPFDTVLTGDASLNRRPMRRVTEPLAEMGARITTSDAGTAPLRIHGGSPLAGIDYTLPVASAQVKSALLLAGMRAEGHTCVTEPAPTRDHTERMLQGFGYPVSRDLATVCLEGGRRLYGTGVDVPADISSAAFLLVAASIAPGSDLTLRHVGWNPTRTGVVEILRRMGADIEVLSTDEVGGEPVADLRVRSAALRGIAIPEELVPLAIDEFPALFIAAACAEGETQLTGAAELRVKESDRIAVMAEGLQTLGVTVEPREDGVRIVGQPVLGGGRVHSHTDHRIAMAFAVAALRAEAPVEIEACENVRTSFPGFVELLRRLGMGVEVDGPHDRGTA.

3 residues coordinate 3-phosphoshikimate: lysine 24, serine 25, and arginine 29. Lysine 24 provides a ligand contact to phosphoenolpyruvate. Phosphoenolpyruvate is bound by residues glycine 97 and arginine 125. 3-phosphoshikimate is bound by residues serine 170, glutamine 172, aspartate 318, and lysine 345. Position 172 (glutamine 172) interacts with phosphoenolpyruvate. Catalysis depends on aspartate 318, which acts as the Proton acceptor. Positions 349 and 391 each coordinate phosphoenolpyruvate.

Belongs to the EPSP synthase family. As to quaternary structure, monomer.

Its subcellular location is the cytoplasm. The enzyme catalyses 3-phosphoshikimate + phosphoenolpyruvate = 5-O-(1-carboxyvinyl)-3-phosphoshikimate + phosphate. Its pathway is metabolic intermediate biosynthesis; chorismate biosynthesis; chorismate from D-erythrose 4-phosphate and phosphoenolpyruvate: step 6/7. Its function is as follows. Catalyzes the transfer of the enolpyruvyl moiety of phosphoenolpyruvate (PEP) to the 5-hydroxyl of shikimate-3-phosphate (S3P) to produce enolpyruvyl shikimate-3-phosphate and inorganic phosphate. This is 3-phosphoshikimate 1-carboxyvinyltransferase from Halorhodospira halophila (strain DSM 244 / SL1) (Ectothiorhodospira halophila (strain DSM 244 / SL1)).